The chain runs to 41 residues: Large ribosomal subunit protein bL36 (41 aa).

It belongs to the bacterial ribosomal protein bL36 family.

The polypeptide is Large ribosomal subunit protein bL36 (Rhodopseudomonas palustris (strain BisB5)).